Here is a 315-residue protein sequence, read N- to C-terminus: Neuroguidin (315 aa).

The residue at position 2 (A2) is an N-acetylalanine. Residues 5–42 (EVLESDLPNAVALLKNLQEQVMAVTAQVQTLTKKVQAK) adopt a coiled-coil conformation. A necessary for interaction with EIF4E region spans residues 41–174 (AKAYPTEKGL…KGTAKKYVPP (134 aa)). A phosphoserine mark is found at S121, S142, and S143. A disordered region spans residues 123–174 (SENDPLRFKPHPSNMMSKLSSEDEEEDEAEEGQSGASGKKSGKGTAKKYVPP). Over residues 144-153 (EDEEEDEAEE) the composition is skewed to acidic residues. Positions 181-205 (YDETEAEREKKRLERAKRRALSSSV) form a coiled coil. S204 and S214 each carry phosphoserine. Positions 252-315 (SKREKGRRKR…RKKKGFRRRR (64 aa)) are disordered. Over residues 264–276 (VMSSQLHSLTHFS) the composition is skewed to polar residues. Positions 295 to 315 (TKKRKKIPKKGRKKKGFRRRR) are enriched in basic residues.

The protein belongs to the SAS10 family. As to quaternary structure, part of the small subunit (SSU) processome, composed of more than 70 proteins and the RNA chaperone small nucleolar RNA (snoRNA) U3. Interacts with CPEB1 and EIF4E.

The protein resides in the nucleus. Its subcellular location is the nucleolus. It localises to the chromosome. The protein localises to the centromere. It is found in the cytoplasm. The protein resides in the cell projection. Its subcellular location is the axon. It localises to the dendrite. The protein localises to the filopodium. In terms of biological role, part of the small subunit (SSU) processome, first precursor of the small eukaryotic ribosomal subunit. During the assembly of the SSU processome in the nucleolus, many ribosome biogenesis factors, an RNA chaperone and ribosomal proteins associate with the nascent pre-rRNA and work in concert to generate RNA folding, modifications, rearrangements and cleavage as well as targeted degradation of pre-ribosomal RNA by the RNA exosome. Its dissociation from the complex determines the transition from state pre-A1 to state pre-A1*. Inhibits mRNA translation in a cytoplasmic polyadenylation element (CPE)-dependent manner. This chain is Neuroguidin (NGDN), found in Bos taurus (Bovine).